Consider the following 132-residue polypeptide: Large ribosomal subunit protein uL14 (132 aa).

The protein belongs to the universal ribosomal protein uL14 family. In terms of assembly, part of the 50S ribosomal subunit. Forms a cluster with proteins L3 and L24e, part of which may contact the 16S rRNA in 2 intersubunit bridges.

Binds to 23S rRNA. Forms part of two intersubunit bridges in the 70S ribosome. This Methanobrevibacter smithii (strain ATCC 35061 / DSM 861 / OCM 144 / PS) protein is Large ribosomal subunit protein uL14.